The following is a 501-amino-acid chain: Glutamate--tRNA ligase (501 aa).

The 'HIGH' region signature appears at 11–21 (PSPTGFLHIGN). The 'KMSKS' region signature appears at 257–261 (KLSKR). Position 260 (Lys-260) interacts with ATP.

The protein belongs to the class-I aminoacyl-tRNA synthetase family. Glutamate--tRNA ligase type 1 subfamily. As to quaternary structure, monomer.

The protein resides in the cytoplasm. It catalyses the reaction tRNA(Glu) + L-glutamate + ATP = L-glutamyl-tRNA(Glu) + AMP + diphosphate. Its function is as follows. Catalyzes the attachment of glutamate to tRNA(Glu) in a two-step reaction: glutamate is first activated by ATP to form Glu-AMP and then transferred to the acceptor end of tRNA(Glu). This Limosilactobacillus reuteri subsp. reuteri (strain JCM 1112) (Lactobacillus reuteri) protein is Glutamate--tRNA ligase.